The sequence spans 251 residues: MKERIHEYCHRLHLPVMAERWSAMAEYASTHNISYSEFLFRLLEAEIVEKQARSIQTLIKLSKLPYRKTIDTFDFTAQPSVDERRIRELLTLSFIDRKENILFLGPPGIGKTHLAISIGMEAIARGYKTYFITAHDLVNQLRRADQEGKLEKKLRVFVKPTVLIIDEMGYLKLDPNSAHYLFQVIARRYEHAPIILTSNKSFGEWGEIVGDSVLATAMLDRLLHHSIIFNLKGESYRLREKRLQEEKQKDQ.

Gly105–Thr112 contributes to the ATP binding site.

This sequence belongs to the IS21/IS1162 putative ATP-binding protein family.

The sequence is that of Insertion sequence IS5376 putative ATP-binding protein from Geobacillus stearothermophilus (Bacillus stearothermophilus).